We begin with the raw amino-acid sequence, 278 residues long: Release factor glutamine methyltransferase (278 aa).

Residues 120 to 124 (GTGTG), Asp-143, and Asn-184 each bind S-adenosyl-L-methionine. 184–187 (NPPY) is a binding site for substrate.

The protein belongs to the protein N5-glutamine methyltransferase family. PrmC subfamily.

It catalyses the reaction L-glutaminyl-[peptide chain release factor] + S-adenosyl-L-methionine = N(5)-methyl-L-glutaminyl-[peptide chain release factor] + S-adenosyl-L-homocysteine + H(+). In terms of biological role, methylates the class 1 translation termination release factors RF1/PrfA and RF2/PrfB on the glutamine residue of the universally conserved GGQ motif. In Deinococcus radiodurans (strain ATCC 13939 / DSM 20539 / JCM 16871 / CCUG 27074 / LMG 4051 / NBRC 15346 / NCIMB 9279 / VKM B-1422 / R1), this protein is Release factor glutamine methyltransferase.